The sequence spans 110 residues: uncharacterized protein (110 aa).

Over residues 1–16 (MSVKLKYDKIDQRNGD) the composition is skewed to basic and acidic residues. Disordered regions lie at residues 1–29 (MSVK…GNGN) and 73–100 (IKQQ…ESPN). Low complexity predominate over residues 20 to 29 (GNHNNCGNGN).

This is an uncharacterized protein from Dictyostelium discoideum (Social amoeba).